The sequence spans 120 residues: NAD(P)H-quinone oxidoreductase subunit 3, chloroplastic (120 aa).

The next 3 membrane-spanning stretches (helical) occupy residues 9 to 29 (IFWV…LISG), 64 to 84 (MFAL…PWAM), and 88 to 108 (VLGV…IVGL).

It belongs to the complex I subunit 3 family. As to quaternary structure, NDH is composed of at least 16 different subunits, 5 of which are encoded in the nucleus.

Its subcellular location is the plastid. It is found in the chloroplast thylakoid membrane. The catalysed reaction is a plastoquinone + NADH + (n+1) H(+)(in) = a plastoquinol + NAD(+) + n H(+)(out). The enzyme catalyses a plastoquinone + NADPH + (n+1) H(+)(in) = a plastoquinol + NADP(+) + n H(+)(out). NDH shuttles electrons from NAD(P)H:plastoquinone, via FMN and iron-sulfur (Fe-S) centers, to quinones in the photosynthetic chain and possibly in a chloroplast respiratory chain. The immediate electron acceptor for the enzyme in this species is believed to be plastoquinone. Couples the redox reaction to proton translocation, and thus conserves the redox energy in a proton gradient. The protein is NAD(P)H-quinone oxidoreductase subunit 3, chloroplastic of Cucumis sativus (Cucumber).